The sequence spans 219 residues: GTP-binding protein Rit1 (219 aa).

Residues 28–35, 75–79, and 134–137 contribute to the GTP site; these read GAGGVGKS, DTAGQ, and NKSD.

Belongs to the small GTPase superfamily. Ras family. As to quaternary structure, interacts with AFDN, the C-terminal domain of RALGDS and RLF, but not with RIN1 and PIK3CA. RLF binds exclusively to the active GTP-bound form. Strongly interacts with BRAF, but only weakly with RAF1. BARF and RAF1 association is dependent upon the GTP-bound state. Interacts with RGL3. As to expression, expressed in many tissues.

It localises to the cell membrane. The enzyme catalyses GTP + H2O = GDP + phosphate + H(+). Its activity is regulated as follows. Alternates between an inactive form bound to GDP and an active form bound to GTP. In terms of biological role, plays a crucial role in coupling NGF stimulation to the activation of both EPHB2 and MAPK14 signaling pathways and in NGF-dependent neuronal differentiation. Involved in ELK1 transactivation through the Ras-MAPK signaling cascade that mediates a wide variety of cellular functions, including cell proliferation, survival, and differentiation. This is GTP-binding protein Rit1 (Rit1) from Mus musculus (Mouse).